The chain runs to 506 residues: Tabersonine 6,7-epoxidase isoform 1 (506 aa).

A helical transmembrane segment spans residues 1–21; that stretch reads MEFVVSLFAFVVSCFILLKVA. N-linked (GlcNAc...) asparagine glycans are attached at residues Asn-173 and Asn-261. Cys-441 lines the heme pocket.

This sequence belongs to the cytochrome P450 family. Heme is required as a cofactor. In terms of tissue distribution, mainly expressed in roots.

The protein localises to the endoplasmic reticulum membrane. The enzyme catalyses (-)-tabersonine + reduced [NADPH--hemoprotein reductase] + O2 = lochnericine + oxidized [NADPH--hemoprotein reductase] + H2O + H(+). Its pathway is alkaloid biosynthesis. In terms of biological role, component of the monoterpenoid indole alkaloids (MIAs, e.g. echitovenine, tabersonine, lochnericine, 19-hydroxytabersonine and horhammericine) biosynthetic pathway; MIAs are used in cancer treatment and other medical applications. Cytochrome P450 catalyzing the conversion of tabersonine to lochnericine. The chain is Tabersonine 6,7-epoxidase isoform 1 from Catharanthus roseus (Madagascar periwinkle).